The primary structure comprises 137 residues: Transcription antitermination protein NusB (137 aa).

This sequence belongs to the NusB family.

Its function is as follows. Involved in transcription antitermination. Required for transcription of ribosomal RNA (rRNA) genes. Binds specifically to the boxA antiterminator sequence of the ribosomal RNA (rrn) operons. In Aeromonas salmonicida (strain A449), this protein is Transcription antitermination protein NusB.